The chain runs to 252 residues: Sororin (252 aa).

Disordered regions lie at residues M1 to T48 and A72 to V142. 6 positions are modified to phosphoserine: S21, S33, S35, S75, S79, and S83. Positions L86–K104 are enriched in basic and acidic residues. The KEN box signature appears at K88–N90. T98 carries the post-translational modification Phosphothreonine. Residues T105 to P116 are compositionally biased toward low complexity. Phosphoserine is present on S107. Phosphothreonine is present on residues T111 and T115. Basic and acidic residues predominate over residues S124–K140. Phosphoserine is present on S154. Position 159 is a phosphothreonine (T159). An FGF motif motif is present at residues F166 to F168. Residues W199–M222 form a disordered region. S209 carries the phosphoserine modification. Residues L230 to E252 form a C-terminal Sororin domain region.

It belongs to the sororin family. In terms of assembly, interacts with the APC/C complex. Interacts with the chromatin-bound cohesin complex; the interaction is indirect, occurs after DNA replication and requires acetylation of the cohesin component SMC3. Interacts (via the FGF motif) with PDS5A and PDS5B; the interaction is direct and prevents the interaction of PDS5A with WAPL. Phosphorylated. Phosphorylation, as cells enter mitosis, disrupts the interaction with PDS5A and relieves the inhibition of WAPL by CDCA5. In terms of processing, ubiquitinated by the APC/C complex in G1, leading to its degradation.

It localises to the nucleus. The protein localises to the chromosome. Its subcellular location is the cytoplasm. Its function is as follows. Regulator of sister chromatid cohesion in mitosis stabilizing cohesin complex association with chromatin. May antagonize the action of WAPL which stimulates cohesin dissociation from chromatin. Cohesion ensures that chromosome partitioning is accurate in both meiotic and mitotic cells and plays an important role in DNA repair. Required for efficient DNA double-stranded break repair. The chain is Sororin (CDCA5) from Homo sapiens (Human).